Here is a 67-residue protein sequence, read N- to C-terminus: Small ribosomal subunit protein eS31 (67 aa).

C31, C34, C49, and C52 together coordinate Zn(2+). The C4-type zinc finger occupies 31–52 (CPKCGAGVFMAEHLNRFACGKC).

It belongs to the eukaryotic ribosomal protein eS31 family. In terms of assembly, part of the 30S ribosomal subunit. Zn(2+) serves as cofactor.

The chain is Small ribosomal subunit protein eS31 from Methanococcus maripaludis (strain C7 / ATCC BAA-1331).